The chain runs to 156 residues: Small ribosomal subunit protein uS7 (156 aa).

Belongs to the universal ribosomal protein uS7 family. In terms of assembly, part of the 30S ribosomal subunit. Contacts proteins S9 and S11.

In terms of biological role, one of the primary rRNA binding proteins, it binds directly to 16S rRNA where it nucleates assembly of the head domain of the 30S subunit. Is located at the subunit interface close to the decoding center, probably blocks exit of the E-site tRNA. The polypeptide is Small ribosomal subunit protein uS7 (Desulfovibrio desulfuricans (strain ATCC 27774 / DSM 6949 / MB)).